Here is a 365-residue protein sequence, read N- to C-terminus: Aminomethyltransferase (365 aa).

The protein belongs to the GcvT family. As to quaternary structure, the glycine cleavage system is composed of four proteins: P, T, L and H.

The catalysed reaction is N(6)-[(R)-S(8)-aminomethyldihydrolipoyl]-L-lysyl-[protein] + (6S)-5,6,7,8-tetrahydrofolate = N(6)-[(R)-dihydrolipoyl]-L-lysyl-[protein] + (6R)-5,10-methylene-5,6,7,8-tetrahydrofolate + NH4(+). The glycine cleavage system catalyzes the degradation of glycine. This chain is Aminomethyltransferase, found in Synechococcus sp. (strain CC9902).